We begin with the raw amino-acid sequence, 533 residues long: Lysine--tRNA ligase 1 (533 aa).

Residues 26-34 carry the 'HIGH' region motif; it reads PSGHIHIGN. The 'KMSKS' region signature appears at 272–276; sequence AMSSS.

It belongs to the class-I aminoacyl-tRNA synthetase family.

It localises to the cytoplasm. It catalyses the reaction tRNA(Lys) + L-lysine + ATP = L-lysyl-tRNA(Lys) + AMP + diphosphate. This chain is Lysine--tRNA ligase 1, found in Methanosarcina acetivorans (strain ATCC 35395 / DSM 2834 / JCM 12185 / C2A).